We begin with the raw amino-acid sequence, 264 residues long: Spermidine/putrescine transport system permease protein PotC (264 aa).

Residues 1-7 (MIGRLLR) lie on the Cytoplasmic side of the membrane. The chain crosses the membrane as a helical span at residues 8–27 (GGFMTAIYAYLYIPIIILIV). The Periplasmic portion of the chain corresponds to 28–65 (NSFNSSRFGINWQGFTTKWYSLLMNNDSLLQAAQHSLT). Residues 60 to 248 (AQHSLTMAVF…VLSLVMVIAS (189 aa)) enclose the ABC transmembrane type-1 domain. Residues 66–85 (MAVFSATFATLIGSLTAVAL) traverse the membrane as a helical segment. At 86–100 (YRYRFRGKPFVSGML) the chain is on the cytoplasmic side. The helical transmembrane segment at 101–120 (FVVMMSPDIVMAISLLVLFM) threads the bilayer. The Periplasmic portion of the chain corresponds to 121–128 (LLGIQLGF). The chain crosses the membrane as a helical span at residues 129–148 (WSLLFSHITFCLPFVVVTVY). Residues 149–176 (SRLKGFDVRMLEAAKDLGASEFTILRKI) lie on the Cytoplasmic side of the membrane. A helical transmembrane segment spans residues 177 to 196 (ILPLAMPAVAAGWVLSFTLS). Over 197-231 (MDDVVVSSFVTGPSYEILPLKIYSMVKVGVSPEVN) the chain is Periplasmic. Residues 232-251 (ALATILLVLSLVMVIASQLI) form a helical membrane-spanning segment. Over 252–264 (ARDKTKGNTGDVK) the chain is Cytoplasmic.

The protein belongs to the binding-protein-dependent transport system permease family. CysTW subfamily.

Its subcellular location is the cell inner membrane. Functionally, required for the activity of the bacterial periplasmic transport system of putrescine and spermidine. The protein is Spermidine/putrescine transport system permease protein PotC (potC) of Escherichia coli O157:H7.